We begin with the raw amino-acid sequence, 291 residues long: 4-hydroxy-tetrahydrodipicolinate synthase (291 aa).

T45 is a binding site for pyruvate. Y133 (proton donor/acceptor) is an active-site residue. K161 functions as the Schiff-base intermediate with substrate in the catalytic mechanism. Residue I203 coordinates pyruvate.

The protein belongs to the DapA family. Homotetramer; dimer of dimers.

It is found in the cytoplasm. It carries out the reaction L-aspartate 4-semialdehyde + pyruvate = (2S,4S)-4-hydroxy-2,3,4,5-tetrahydrodipicolinate + H2O + H(+). It functions in the pathway amino-acid biosynthesis; L-lysine biosynthesis via DAP pathway; (S)-tetrahydrodipicolinate from L-aspartate: step 3/4. Its function is as follows. Catalyzes the condensation of (S)-aspartate-beta-semialdehyde [(S)-ASA] and pyruvate to 4-hydroxy-tetrahydrodipicolinate (HTPA). This chain is 4-hydroxy-tetrahydrodipicolinate synthase, found in Laribacter hongkongensis (strain HLHK9).